We begin with the raw amino-acid sequence, 111 residues long: MTLAAPIAVYVLAALAEIAGCFAFWAWLRLGKSPLWLVPGMVSLAVFAWLLTRVDADFAGRAYAAYGGIYVTASLGWLWLTEGQVPTRWDILGGGLCVLGAMVILAGPRAA.

Helical transmembrane passes span 7-27 (IAVY…FWAW), 30-50 (LGKS…FAWL), 62-82 (AYAA…WLTE), and 91-111 (ILGG…PRAA).

The protein belongs to the UPF0060 family.

It localises to the cell inner membrane. This Paracoccus denitrificans (strain Pd 1222) protein is UPF0060 membrane protein Pden_1837.